The primary structure comprises 316 residues: 4-diphosphocytidyl-2-C-methyl-D-erythritol kinase (316 aa).

The active site involves Lys-11. 99 to 109 (PVAAGLAGGST) contacts ATP. Asp-141 is a catalytic residue.

Belongs to the GHMP kinase family. IspE subfamily.

The catalysed reaction is 4-CDP-2-C-methyl-D-erythritol + ATP = 4-CDP-2-C-methyl-D-erythritol 2-phosphate + ADP + H(+). It functions in the pathway isoprenoid biosynthesis; isopentenyl diphosphate biosynthesis via DXP pathway; isopentenyl diphosphate from 1-deoxy-D-xylulose 5-phosphate: step 3/6. Catalyzes the phosphorylation of the position 2 hydroxy group of 4-diphosphocytidyl-2C-methyl-D-erythritol. The protein is 4-diphosphocytidyl-2-C-methyl-D-erythritol kinase of Gloeothece citriformis (strain PCC 7424) (Cyanothece sp. (strain PCC 7424)).